The following is a 426-amino-acid chain: Serine hydroxymethyltransferase (426 aa).

(6S)-5,6,7,8-tetrahydrofolate contacts are provided by residues Leu-118 and 122–124 (GHL). Lys-227 is modified (N6-(pyridoxal phosphate)lysine). Residues 342-368 (NTIPNDPKPPTQASGIRLGTPAMTTRG) form a disordered region.

It belongs to the SHMT family. Homodimer. It depends on pyridoxal 5'-phosphate as a cofactor.

Its subcellular location is the cytoplasm. It catalyses the reaction (6R)-5,10-methylene-5,6,7,8-tetrahydrofolate + glycine + H2O = (6S)-5,6,7,8-tetrahydrofolate + L-serine. It participates in one-carbon metabolism; tetrahydrofolate interconversion. Its pathway is amino-acid biosynthesis; glycine biosynthesis; glycine from L-serine: step 1/1. Functionally, catalyzes the reversible interconversion of serine and glycine with tetrahydrofolate (THF) serving as the one-carbon carrier. This reaction serves as the major source of one-carbon groups required for the biosynthesis of purines, thymidylate, methionine, and other important biomolecules. Also exhibits THF-independent aldolase activity toward beta-hydroxyamino acids, producing glycine and aldehydes, via a retro-aldol mechanism. This is Serine hydroxymethyltransferase from Thermomicrobium roseum (strain ATCC 27502 / DSM 5159 / P-2).